Consider the following 321-residue polypeptide: tRNA U34 carboxymethyltransferase (321 aa).

Carboxy-S-adenosyl-L-methionine contacts are provided by residues K90, W104, K109, G129, 151-153, 180-181, M195, Y199, and R314; these read DPT and IE.

It belongs to the class I-like SAM-binding methyltransferase superfamily. CmoB family. Homotetramer.

It catalyses the reaction carboxy-S-adenosyl-L-methionine + 5-hydroxyuridine(34) in tRNA = 5-carboxymethoxyuridine(34) in tRNA + S-adenosyl-L-homocysteine + H(+). Its function is as follows. Catalyzes carboxymethyl transfer from carboxy-S-adenosyl-L-methionine (Cx-SAM) to 5-hydroxyuridine (ho5U) to form 5-carboxymethoxyuridine (cmo5U) at position 34 in tRNAs. This Haemophilus influenzae (strain 86-028NP) protein is tRNA U34 carboxymethyltransferase.